Here is a 154-residue protein sequence, read N- to C-terminus: Cyclin-dependent protein kinase inhibitor SMR14 (154 aa).

Positions 1-111 (MSKIKIFHLF…RPPRKPKAIP (111 aa)) are disordered. Over residues 24–37 (SLLVPSKSDSLDSS) the composition is skewed to low complexity. Positions 74 to 83 (KWECKDEESP) are enriched in basic and acidic residues.

Functionally, probable cyclin-dependent protein kinase (CDK) inhibitor that functions as a repressor of mitosis in the endoreduplication cell cycle. This Arabidopsis thaliana (Mouse-ear cress) protein is Cyclin-dependent protein kinase inhibitor SMR14.